We begin with the raw amino-acid sequence, 424 residues long: Microcin H47 secretion protein MchE (424 aa).

At 1 to 25 (MFRQDALENRKMKWQGRAILLPGIP) the chain is on the cytoplasmic side. A helical transmembrane segment spans residues 26–46 (LWLIMLGSIVFITAFLMFIIV). The Periplasmic segment spans residues 47–424 (GTYSRRVNVS…KHSATGPLND (378 aa)).

Belongs to the membrane fusion protein (MFP) (TC 8.A.1) family.

The protein resides in the cell inner membrane. Probably involved, in conjunction with MchF, in the secretion of microcin H47. The protein is Microcin H47 secretion protein MchE (mchE) of Escherichia coli.